Here is a 393-residue protein sequence, read N- to C-terminus: Pyruvate dehydrogenase E1 component subunit alpha-2, mitochondrial (393 aa).

A mitochondrion-targeting transit peptide spans 1-28; sequence MALSRLSSRSNTFLKPAITALPSSIRRH. Residues histidine 94, tyrosine 120, arginine 121, glycine 169, valine 171, aspartate 200, glycine 201, alanine 202, asparagine 229, and tyrosine 231 each contribute to the pyruvate site. Thiamine diphosphate-binding residues include tyrosine 120, arginine 121, glycine 169, valine 171, aspartate 200, glycine 201, alanine 202, and asparagine 229. Aspartate 200 provides a ligand contact to Mg(2+). The Mg(2+) site is built by asparagine 229 and tyrosine 231. Thiamine diphosphate is bound at residue histidine 295.

As to quaternary structure, tetramer of 2 alpha and 2 beta subunits. Thiamine diphosphate serves as cofactor. It depends on Mg(2+) as a cofactor.

The protein localises to the mitochondrion matrix. The catalysed reaction is N(6)-[(R)-lipoyl]-L-lysyl-[protein] + pyruvate + H(+) = N(6)-[(R)-S(8)-acetyldihydrolipoyl]-L-lysyl-[protein] + CO2. Its activity is regulated as follows. E1 activity is regulated by phosphorylation (inactivation) and dephosphorylation (activation) of the alpha subunit. The pyruvate dehydrogenase complex catalyzes the overall conversion of pyruvate to acetyl-CoA and CO(2). It contains multiple copies of three enzymatic components: pyruvate dehydrogenase (E1), dihydrolipoamide acetyltransferase (E2) and lipoamide dehydrogenase (E3). The sequence is that of Pyruvate dehydrogenase E1 component subunit alpha-2, mitochondrial (IAR4) from Arabidopsis thaliana (Mouse-ear cress).